Here is a 400-residue protein sequence, read N- to C-terminus: Enoyl-[acyl-carrier-protein] reductase [NADH] (400 aa).

Residues 48 to 53 (GASTGY), 74 to 75 (FE), 111 to 112 (DA), and 139 to 140 (LA) each bind NAD(+). Residue tyrosine 225 participates in substrate binding. Tyrosine 235 serves as the catalytic Proton donor. NAD(+) contacts are provided by residues lysine 244 and 273–275 (VVT).

It belongs to the TER reductase family. As to quaternary structure, monomer.

It catalyses the reaction a 2,3-saturated acyl-[ACP] + NAD(+) = a (2E)-enoyl-[ACP] + NADH + H(+). It functions in the pathway lipid metabolism; fatty acid biosynthesis. Its function is as follows. Involved in the final reduction of the elongation cycle of fatty acid synthesis (FAS II). Catalyzes the reduction of a carbon-carbon double bond in an enoyl moiety that is covalently linked to an acyl carrier protein (ACP). The sequence is that of Enoyl-[acyl-carrier-protein] reductase [NADH] from Burkholderia ambifaria (strain MC40-6).